The primary structure comprises 469 residues: Neuraminidase (469 aa).

The Intravirion portion of the chain corresponds to 1–6; sequence MNPNQK. Residues 7-27 form a helical membrane-spanning segment; that stretch reads LFASSGIAIALGIINLLIGIS. The interval 11 to 33 is involved in apical transport and lipid raft association; sequence SGIAIALGIINLLIGISNMSLNI. 8 N-linked (GlcNAc...) asparagine; by host glycosylation sites follow: Asn-28, Asn-32, Asn-46, Asn-55, Asn-56, Asn-65, Asn-66, and Asn-85. Residues 28 to 469 are Virion surface-facing; that stretch reads NMSLNISLYS…PDGAQIKYFS (442 aa). The tract at residues 36 to 85 is hypervariable stalk region; sequence YSKGENHKSDNLTCTNINQNNTTMVNTYINNTTIIDKNTKMENPGYLLLN. Residues 88–469 are head of neuraminidase; it reads LCNVEGWVVI…PDGAQIKYFS (382 aa). 8 disulfides stabilise this stretch: Cys-89-Cys-417, Cys-121-Cys-126, Cys-181-Cys-228, Cys-230-Cys-235, Cys-276-Cys-289, Cys-278-Cys-287, Cys-316-Cys-334, and Cys-421-Cys-448. Substrate is bound at residue Arg-115. Asn-143 is a glycosylation site (N-linked (GlcNAc...) asparagine; by host). Asp-148 functions as the Proton donor/acceptor in the catalytic mechanism. Substrate is bound at residue Arg-149. N-linked (GlcNAc...) asparagine; by host glycosylation is found at Asn-198 and Asn-232. Position 274-275 (274-275) interacts with substrate; it reads EE. Residue Arg-290 participates in substrate binding. Asp-291, Gly-295, and Asp-322 together coordinate Ca(2+). Asn-356 carries N-linked (GlcNAc...) asparagine; by host glycosylation. Position 369 (Arg-369) interacts with substrate. The N-linked (GlcNAc...) asparagine; by host glycan is linked to Asn-399. Tyr-403 serves as the catalytic Nucleophile.

Belongs to the glycosyl hydrolase 34 family. Homotetramer. Ca(2+) is required as a cofactor. N-glycosylated.

The protein localises to the virion membrane. Its subcellular location is the host apical cell membrane. It catalyses the reaction Hydrolysis of alpha-(2-&gt;3)-, alpha-(2-&gt;6)-, alpha-(2-&gt;8)- glycosidic linkages of terminal sialic acid residues in oligosaccharides, glycoproteins, glycolipids, colominic acid and synthetic substrates.. With respect to regulation, inhibited by the neuraminidase inhibitors zanamivir (Relenza) and oseltamivir (Tamiflu). These drugs interfere with the release of progeny virus from infected cells and are effective against all influenza strains. Resistance to neuraminidase inhibitors is quite rare. In terms of biological role, catalyzes the removal of terminal sialic acid residues from viral and cellular glycoconjugates. Cleaves off the terminal sialic acids on the glycosylated HA during virus budding to facilitate virus release. Additionally helps virus spread through the circulation by further removing sialic acids from the cell surface. These cleavages prevent self-aggregation and ensure the efficient spread of the progeny virus from cell to cell. Otherwise, infection would be limited to one round of replication. Described as a receptor-destroying enzyme because it cleaves a terminal sialic acid from the cellular receptors. May facilitate viral invasion of the upper airways by cleaving the sialic acid moieties on the mucin of the airway epithelial cells. Likely to plays a role in the budding process through its association with lipid rafts during intracellular transport. May additionally display a raft-association independent effect on budding. Plays a role in the determination of host range restriction on replication and virulence. Sialidase activity in late endosome/lysosome traffic seems to enhance virus replication. The protein is Neuraminidase of Influenza A virus (strain A/Equine/Prague/1/1956 H7N7).